Reading from the N-terminus, the 360-residue chain is 3-isopropylmalate dehydrogenase (360 aa).

NAD(+) is bound at residue 76 to 89 (GPKWDKLDMAIRPE). Substrate contacts are provided by Arg96, Arg106, Arg134, and Asp224. The Mg(2+) site is built by Asp224, Asp248, and Asp252. 282-294 (GSAPDIAGQNMAN) is an NAD(+) binding site.

It belongs to the isocitrate and isopropylmalate dehydrogenases family. LeuB type 1 subfamily. In terms of assembly, homodimer. Requires Mg(2+) as cofactor. Mn(2+) is required as a cofactor.

The protein localises to the cytoplasm. The enzyme catalyses (2R,3S)-3-isopropylmalate + NAD(+) = 4-methyl-2-oxopentanoate + CO2 + NADH. It participates in amino-acid biosynthesis; L-leucine biosynthesis; L-leucine from 3-methyl-2-oxobutanoate: step 3/4. Its function is as follows. Catalyzes the oxidation of 3-carboxy-2-hydroxy-4-methylpentanoate (3-isopropylmalate) to 3-carboxy-4-methyl-2-oxopentanoate. The product decarboxylates to 4-methyl-2 oxopentanoate. This is 3-isopropylmalate dehydrogenase from Hahella chejuensis (strain KCTC 2396).